Here is a 992-residue protein sequence, read N- to C-terminus: Epstein-Barr nuclear antigen 6 (992 aa).

Residues 1-70 (MESFEGQGDS…SRGDENRGWM (70 aa)) are disordered. Positions 12-31 (QSPDNERGDNVQTTGEHDQD) are enriched in basic and acidic residues. Residues 130 to 159 (LILDSGLDTQHILCFVMAARQRLQDIRRGP) are interaction with host PIM1. Disordered regions lie at residues 355–905 (ATGG…DSMA), 931–954 (PLDINATTPKRPRVEESSHGPARC), and 967–992 (DNSEISVFPKDAKQTDYDASTESELD). Residues 381–391 (VELESSDDELP) are compositionally biased toward acidic residues. Polar residues predominate over residues 445–461 (AQSTPERPGPSEQSSVT). The span at 479–495 (QPPPVPKPVPVKPTPPP) shows a compositional bias: pro residues. Positions 506 to 520 (YDDDVIEVIDVETTE) are enriched in acidic residues. The stretch at 551–555 (PPTVS) is one 1-1; approximate repeat. The tract at residues 551–610 (PPTVSPSDTGPPAVGPPAAGPPAAGPPAAGPPAAGPPAAGPPAAGPRILAPLSAGPPAAG) is 12 X 5 AA approximate tandem repeats of P-P-A-A-G. Residues 556-560 (PSDTG) form a 2-1; approximate repeat. A 3-1; approximate repeat occupies 561–565 (PPAVG). The span at 563-594 (AVGPPAAGPPAAGPPAAGPPAAGPPAAGPPAA) shows a compositional bias: pro residues. 6 consecutive repeat copies span residues 566 to 570 (PPAAG), 571 to 575 (PPAAG), 576 to 580 (PPAAG), 581 to 585 (PPAAG), 586 to 590 (PPAAG), and 591 to 595 (PPAAG). Residues 595-611 (GPRILAPLSAGPPAAGP) are compositionally biased toward low complexity. One copy of the 10-1; approximate repeat lies at 596 to 600 (PRILA). Residues 601–605 (PLSAG) form an 11-1; approximate repeat. One copy of the 12-1 repeat lies at 606–610 (PPAAG). 2 stretches are compositionally biased toward polar residues: residues 659–676 (TQMQQEPSSHLQSATQPT) and 700–714 (IESSHLSSMSPTQPI). Over residues 715–724 (SHEEQPRYED) the composition is skewed to basic and acidic residues. Composition is skewed to low complexity over residues 738–764 (AAQPAPQAPYQGYQEPPAPQAPYQGYQ) and 772–781 (PYQGYQEPPA). 3 tandem repeats follow at residues 741–753 (PAPQAPYQGYQEP), 754–766 (PAPQAPYQGYQEP), and 767–779 (PPPQAPYQGYQEP). Residues 741-779 (PAPQAPYQGYQEPPAPQAPYQGYQEPPPPQAPYQGYQEP) are 3 X 13 AA tandem repeats of P-[AP]-P-Q-A-P-Y-Q-G-Y-Q-E-P. Polar residues predominate over residues 845–857 (DQVSQFPHLQSET). The span at 859–881 (PPRLQLSLVPLVSSSAPSWSSPQ) shows a compositional bias: low complexity. Pro residues predominate over residues 882–899 (PRAPIRPIPTRFPPPPMP).

Belongs to the herpesviridae EBNA-6 family. In terms of assembly, interacts with host CTPB1; this interaction leads to gene repression, but also seems to interfere with the repressive function of CtBP pre-bound to DNA, leading to EBNA6 mediated up-regulation of many host genes. Interacts with host MYC; this interaction enhances MYC stability. Interacts (via N-terminus) with host RBPJ. Interacts (via N-terminus) with host histone H2AX; this interaction facilitates H2AX proteasomal degradation. Interacts with host TP73; this interaction inhibits TP73-mediated apoptotic pathway. Interacts (via N-terminus) with host PIM1; this interaction upregulates and stabilizes PIM1 and induces cell proliferation by inhibiting the growth suppressive properties of p21.

It localises to the host nucleus. The protein resides in the host nucleus matrix. Functionally, plays an essential role for the activation and immortalization of human B-cells. Represses transcription of viral promoters TP1 and Cp through interaction with host RBPJ, and inhibits EBNA2-mediated activation of these promoters. Targets host chromatin through interactions with host transcription factors, especially RBPJ and IRF4. Alternatively, EBNA6 also regulates the transcription of the EBV oncogene LMP1 in a cell cycle-dependent manner. Modulates the activity of several host proteins involved in cell cycle regulation including host cyclin A, MYC, RB, p21 and p27 mainly through binding to the host SCF(SKP2) complex. Inhibits the promoter of host H2AX and targets H2AX to proteasomal degradation in order to promote latency and cell proliferation. Upregulates host PIM1 expression and stabilization. Potentiates PIM1 to promote cell proliferation by inhibiting the growth suppressive properties of p21. The polypeptide is Epstein-Barr nuclear antigen 6 (EBNA6) (Epstein-Barr virus (strain B95-8) (HHV-4)).